The sequence spans 192 residues: Acireductone dioxygenase 2 (192 aa).

Residues His-99, His-101, Glu-105, and His-144 each coordinate Fe(2+). His-99, His-101, Glu-105, and His-144 together coordinate Ni(2+).

The protein belongs to the acireductone dioxygenase (ARD) family. Fe(2+) is required as a cofactor. Requires Ni(2+) as cofactor.

Its subcellular location is the cytoplasm. The protein resides in the nucleus. The catalysed reaction is 1,2-dihydroxy-5-(methylsulfanyl)pent-1-en-3-one + O2 = 4-methylsulfanyl-2-oxobutanoate + formate + 2 H(+). It carries out the reaction 1,2-dihydroxy-5-(methylsulfanyl)pent-1-en-3-one + O2 = 3-(methylsulfanyl)propanoate + CO + formate + 2 H(+). The protein operates within amino-acid biosynthesis; L-methionine biosynthesis via salvage pathway; L-methionine from S-methyl-5-thio-alpha-D-ribose 1-phosphate: step 5/6. Its function is as follows. Catalyzes 2 different reactions between oxygen and the acireductone 1,2-dihydroxy-3-keto-5-methylthiopentene (DHK-MTPene) depending upon the metal bound in the active site. Fe-containing acireductone dioxygenase (Fe-ARD) produces formate and 2-keto-4-methylthiobutyrate (KMTB), the alpha-ketoacid precursor of methionine in the methionine recycle pathway. Ni-containing acireductone dioxygenase (Ni-ARD) produces methylthiopropionate, carbon monoxide and formate, and does not lie on the methionine recycle pathway. This chain is Acireductone dioxygenase 2 (ARD2), found in Arabidopsis thaliana (Mouse-ear cress).